We begin with the raw amino-acid sequence, 143 residues long: UPF0102 protein Acid345_3985 (143 aa).

It belongs to the UPF0102 family.

The chain is UPF0102 protein Acid345_3985 from Koribacter versatilis (strain Ellin345).